Consider the following 411-residue polypeptide: Argininosuccinate lyase (411 aa).

This sequence belongs to the lyase 1 family. Argininosuccinate lyase subfamily.

The protein localises to the cytoplasm. It carries out the reaction 2-(N(omega)-L-arginino)succinate = fumarate + L-arginine. It functions in the pathway amino-acid biosynthesis; L-arginine biosynthesis; L-arginine from L-ornithine and carbamoyl phosphate: step 3/3. The chain is Argininosuccinate lyase from Legionella pneumophila subsp. pneumophila (strain Philadelphia 1 / ATCC 33152 / DSM 7513).